Here is a 413-residue protein sequence, read N- to C-terminus: Putative competence-damage inducible protein (413 aa).

The protein belongs to the CinA family.

The polypeptide is Putative competence-damage inducible protein (Thermoanaerobacter sp. (strain X514)).